The chain runs to 99 residues: Cell division protein FtsB (99 aa).

Topologically, residues Met1–Phe3 are cytoplasmic. The chain crosses the membrane as a helical span at residues Phe4–Ser21. The Periplasmic segment spans residues Gly22–Gln99. Residues Val31 to Asn73 are a coiled coil.

Belongs to the FtsB family. Part of a complex composed of FtsB, FtsL and FtsQ.

It localises to the cell inner membrane. Its function is as follows. Essential cell division protein. May link together the upstream cell division proteins, which are predominantly cytoplasmic, with the downstream cell division proteins, which are predominantly periplasmic. The chain is Cell division protein FtsB from Shewanella oneidensis (strain ATCC 700550 / JCM 31522 / CIP 106686 / LMG 19005 / NCIMB 14063 / MR-1).